The sequence spans 229 residues: Putative N-acetylmannosamine-6-phosphate 2-epimerase (229 aa).

The protein belongs to the NanE family.

It catalyses the reaction an N-acyl-D-glucosamine 6-phosphate = an N-acyl-D-mannosamine 6-phosphate. The protein operates within amino-sugar metabolism; N-acetylneuraminate degradation; D-fructose 6-phosphate from N-acetylneuraminate: step 3/5. Its function is as follows. Converts N-acetylmannosamine-6-phosphate (ManNAc-6-P) to N-acetylglucosamine-6-phosphate (GlcNAc-6-P). This is Putative N-acetylmannosamine-6-phosphate 2-epimerase from Escherichia coli O7:K1 (strain IAI39 / ExPEC).